A 66-amino-acid chain; its full sequence is UPF0337 protein bsl1473 (66 aa).

It belongs to the UPF0337 (CsbD) family.

This chain is UPF0337 protein bsl1473, found in Bradyrhizobium diazoefficiens (strain JCM 10833 / BCRC 13528 / IAM 13628 / NBRC 14792 / USDA 110).